Reading from the N-terminus, the 412-residue chain is Serine hydroxymethyltransferase 1 (412 aa).

(6S)-5,6,7,8-tetrahydrofolate-binding positions include Leu116 and 120–122; that span reads GHL. Position 225 is an N6-(pyridoxal phosphate)lysine (Lys225).

Belongs to the SHMT family. As to quaternary structure, homodimer. It depends on pyridoxal 5'-phosphate as a cofactor.

The protein resides in the cytoplasm. The catalysed reaction is (6R)-5,10-methylene-5,6,7,8-tetrahydrofolate + glycine + H2O = (6S)-5,6,7,8-tetrahydrofolate + L-serine. It functions in the pathway one-carbon metabolism; tetrahydrofolate interconversion. Its pathway is amino-acid biosynthesis; glycine biosynthesis; glycine from L-serine: step 1/1. Catalyzes the reversible interconversion of serine and glycine with tetrahydrofolate (THF) serving as the one-carbon carrier. This reaction serves as the major source of one-carbon groups required for the biosynthesis of purines, thymidylate, methionine, and other important biomolecules. Also exhibits THF-independent aldolase activity toward beta-hydroxyamino acids, producing glycine and aldehydes, via a retro-aldol mechanism. The polypeptide is Serine hydroxymethyltransferase 1 (Pseudomonas fluorescens (strain Pf0-1)).